The sequence spans 93 residues: UPF0728 protein C10orf53 homolog (93 aa).

This sequence belongs to the UPF0728 family.

In Mus musculus (Mouse), this protein is UPF0728 protein C10orf53 homolog.